The primary structure comprises 131 residues: Large ribosomal subunit protein eL32 (131 aa).

This sequence belongs to the eukaryotic ribosomal protein eL32 family.

This is Large ribosomal subunit protein eL32 (RPL32) from Candida glabrata (strain ATCC 2001 / BCRC 20586 / JCM 3761 / NBRC 0622 / NRRL Y-65 / CBS 138) (Yeast).